Here is a 283-residue protein sequence, read N- to C-terminus: Putative transcription factor kapC (283 aa).

The segment covering 1–10 (MQPTLAPAPH) has biased composition (pro residues). A disordered region spans residues 1-121 (MQPTLAPAPH…NRAAQRAFRQ (121 aa)). Residues 26-42 (HDQLLAAHQHLSHPQQA) are compositionally biased toward low complexity. The segment covering 55–67 (QPNTTSPRDQNNI) has biased composition (polar residues). One can recognise a bZIP domain in the interval 102-165 (PLSTSKRAAQ…EYIINLQSRL (64 aa)). The interval 103–126 (LSTSKRAAQNRAAQRAFRQRKESY) is basic motif. The span at 108 to 118 (RAAQNRAAQRA) shows a compositional bias: low complexity. The leucine-zipper stretch occupies residues 130-161 (LEEQVKEFDNTNETMKQLQAENYQLREYIINL). The interval 178-283 (NIDLNQPRND…EPGHGLPVVS (106 aa)) is disordered.

Belongs to the bZIP family.

It is found in the nucleus. Its function is as follows. Putative transcription factor. This chain is Putative transcription factor kapC (kapC), found in Aspergillus niger (strain ATCC MYA-4892 / CBS 513.88 / FGSC A1513).